Consider the following 486-residue polypeptide: Malonate-semialdehyde dehydrogenase (486 aa).

The NAD(+) site is built by phenylalanine 154, lysine 178, glutamate 181, arginine 182, and serine 231. The Nucleophile role is filled by cysteine 286. Glutamate 386 contacts NAD(+).

It belongs to the aldehyde dehydrogenase family. IolA subfamily. As to quaternary structure, homotetramer.

The catalysed reaction is 3-oxopropanoate + NAD(+) + CoA + H2O = hydrogencarbonate + acetyl-CoA + NADH + H(+). It carries out the reaction 2-methyl-3-oxopropanoate + NAD(+) + CoA + H2O = propanoyl-CoA + hydrogencarbonate + NADH + H(+). The protein operates within polyol metabolism; myo-inositol degradation into acetyl-CoA; acetyl-CoA from myo-inositol: step 7/7. Catalyzes the oxidation of malonate semialdehyde (MSA) and methylmalonate semialdehyde (MMSA) into acetyl-CoA and propanoyl-CoA, respectively. Is involved in a myo-inositol catabolic pathway. Bicarbonate, and not CO2, is the end-product of the enzymatic reaction. In Bacillus cereus (strain AH187), this protein is Malonate-semialdehyde dehydrogenase.